Reading from the N-terminus, the 130-residue chain is Small ribosomal subunit protein uS9 (130 aa).

The protein belongs to the universal ribosomal protein uS9 family.

The chain is Small ribosomal subunit protein uS9 from Cupriavidus necator (strain ATCC 17699 / DSM 428 / KCTC 22496 / NCIMB 10442 / H16 / Stanier 337) (Ralstonia eutropha).